The primary structure comprises 487 residues: N-succinylglutamate 5-semialdehyde dehydrogenase (487 aa).

Position 221-226 (221-226) interacts with NAD(+); sequence GSSRTG. Active-site residues include Glu-244 and Cys-278.

It belongs to the aldehyde dehydrogenase family. AstD subfamily.

It catalyses the reaction N-succinyl-L-glutamate 5-semialdehyde + NAD(+) + H2O = N-succinyl-L-glutamate + NADH + 2 H(+). Its pathway is amino-acid degradation; L-arginine degradation via AST pathway; L-glutamate and succinate from L-arginine: step 4/5. Its function is as follows. Catalyzes the NAD-dependent reduction of succinylglutamate semialdehyde into succinylglutamate. This Pseudomonas putida (strain ATCC 47054 / DSM 6125 / CFBP 8728 / NCIMB 11950 / KT2440) protein is N-succinylglutamate 5-semialdehyde dehydrogenase.